The sequence spans 536 residues: Bifunctional purine biosynthesis protein PurH (536 aa).

The MGS-like domain occupies 8-158 (IPAPDEVRIK…KNHAYVTVVT (151 aa)).

It belongs to the PurH family.

The catalysed reaction is (6R)-10-formyltetrahydrofolate + 5-amino-1-(5-phospho-beta-D-ribosyl)imidazole-4-carboxamide = 5-formamido-1-(5-phospho-D-ribosyl)imidazole-4-carboxamide + (6S)-5,6,7,8-tetrahydrofolate. It catalyses the reaction IMP + H2O = 5-formamido-1-(5-phospho-D-ribosyl)imidazole-4-carboxamide. It functions in the pathway purine metabolism; IMP biosynthesis via de novo pathway; 5-formamido-1-(5-phospho-D-ribosyl)imidazole-4-carboxamide from 5-amino-1-(5-phospho-D-ribosyl)imidazole-4-carboxamide (10-formyl THF route): step 1/1. Its pathway is purine metabolism; IMP biosynthesis via de novo pathway; IMP from 5-formamido-1-(5-phospho-D-ribosyl)imidazole-4-carboxamide: step 1/1. The polypeptide is Bifunctional purine biosynthesis protein PurH (Sinorhizobium medicae (strain WSM419) (Ensifer medicae)).